We begin with the raw amino-acid sequence, 185 residues long: MEDKPLGILRVHVKRGINLAIRDATTSDPYVVITLANQKLKTRVINNNCNPVWNEQLTLSIKDVNDPIRLTVFDKDRFSGDDKMGDAEIDFRPFLEAHQMELDFQKLPNGCAIKRIRPGRTNCLAEESSITWSNGKIMQEMILRLKNVECGEVELMLEWTDGPGCKGLGREGSKKTPWMPTKRLD.

A C2 domain is found at 1 to 104 (MEDKPLGILR…LEAHQMELDF (104 aa)). The Ca(2+) site is built by R22, D23, D28, D74, K75, D76, and D82.

It belongs to the plant CAR protein family. In terms of assembly, binds to PYR/PYL/RCAR abscisic acid intracellular receptors in an ABA-independent manner, both at the plasma membrane and in the nucleus. Interacts with LOT1 in the nuleus; this interaction is repressed by abscisic acid (ABA) and is sensitive to calcium ion Ca(2+), leading to free CAR9 accumulation at the plasma membrane. Ca(2+) is required as a cofactor.

It localises to the cell membrane. Its subcellular location is the nucleus. Functionally, stimulates the GTPase/ATPase activities of Obg-like ATPases. Mediates the transient calcium-dependent interaction of PYR/PYL/RCAR abscisic acid (ABA) receptors with the plasma membrane and thus regulates ABA sensitivity. The sequence is that of Protein C2-DOMAIN ABA-RELATED 9 from Arabidopsis thaliana (Mouse-ear cress).